Here is a 198-residue protein sequence, read N- to C-terminus: Inosine triphosphate pyrophosphatase (198 aa).

The residue at position 2 (alanine 2) is an N-acetylalanine. An ITP-binding site is contributed by 14 to 19 (TGNAKK). Glutamate 44 lines the Mg(2+) pocket. ITP-binding positions include lysine 56, 72–73 (DT), and lysine 89. A Phosphoserine modification is found at serine 146. ITP contacts are provided by residues 149 to 152 (FGWD), lysine 172, and 177 to 178 (HR).

Belongs to the HAM1 NTPase family. In terms of assembly, homodimer. Mg(2+) is required as a cofactor. Mn(2+) serves as cofactor.

The protein resides in the cytoplasm. The enzyme catalyses ITP + H2O = IMP + diphosphate + H(+). The catalysed reaction is dITP + H2O = dIMP + diphosphate + H(+). It catalyses the reaction XTP + H2O = XMP + diphosphate + H(+). It carries out the reaction N(6)-hydroxy-dATP + H2O = N(6)-hydroxy-dAMP + diphosphate + H(+). Functionally, pyrophosphatase that hydrolyzes the non-canonical purine nucleotides inosine triphosphate (ITP), deoxyinosine triphosphate (dITP) as well as 2'-deoxy-N-6-hydroxylaminopurine triphosphate (dHAPTP) and xanthosine 5'-triphosphate (XTP) to their respective monophosphate derivatives. The enzyme does not distinguish between the deoxy- and ribose forms. Probably excludes non-canonical purines from RNA and DNA precursor pools, thus preventing their incorporation into RNA and DNA and avoiding chromosomal lesions. The sequence is that of Inosine triphosphate pyrophosphatase (Itpa) from Rattus norvegicus (Rat).